The following is a 64-amino-acid chain: Large ribosomal subunit protein bL35 (64 aa).

The interval 17 to 41 is disordered; that stretch reads TGSGKVKRERMNGSHNLEHKNRKRT. The segment covering 25–35 has biased composition (basic and acidic residues); the sequence is ERMNGSHNLEH.

The protein belongs to the bacterial ribosomal protein bL35 family.

The chain is Large ribosomal subunit protein bL35 from Chlorobaculum parvum (strain DSM 263 / NCIMB 8327) (Chlorobium vibrioforme subsp. thiosulfatophilum).